The chain runs to 467 residues: tRNA-2-methylthio-N(6)-dimethylallyladenosine synthase (467 aa).

The 117-residue stretch at 2–118 (PSVFIKTFGC…VAEIADNLLK (117 aa)) folds into the MTTase N-terminal domain. [4Fe-4S] cluster-binding residues include cysteine 11, cysteine 47, cysteine 81, cysteine 159, cysteine 163, and cysteine 166. In terms of domain architecture, Radical SAM core spans 145-379 (TKAQPIAYVS…LEIQNKITME (235 aa)). The region spanning 382 to 445 (QKWVGQVVEI…GHTFYGTPLI (64 aa)) is the TRAM domain.

The protein belongs to the methylthiotransferase family. MiaB subfamily. In terms of assembly, monomer. [4Fe-4S] cluster is required as a cofactor.

It is found in the cytoplasm. It catalyses the reaction N(6)-dimethylallyladenosine(37) in tRNA + (sulfur carrier)-SH + AH2 + 2 S-adenosyl-L-methionine = 2-methylsulfanyl-N(6)-dimethylallyladenosine(37) in tRNA + (sulfur carrier)-H + 5'-deoxyadenosine + L-methionine + A + S-adenosyl-L-homocysteine + 2 H(+). Functionally, catalyzes the methylthiolation of N6-(dimethylallyl)adenosine (i(6)A), leading to the formation of 2-methylthio-N6-(dimethylallyl)adenosine (ms(2)i(6)A) at position 37 in tRNAs that read codons beginning with uridine. The polypeptide is tRNA-2-methylthio-N(6)-dimethylallyladenosine synthase (Methylacidiphilum infernorum (isolate V4) (Methylokorus infernorum (strain V4))).